A 507-amino-acid polypeptide reads, in one-letter code: Alkyl hydroperoxide reductase subunit F (507 aa).

Residue 207–222 (DVLIVGGGPASGSAAI) participates in FAD binding. C335 and C338 are disulfide-bonded. 347–361 (DVAVIGGGNSGVEAA) contributes to the NAD(+) binding site. 467 to 477 (TNVPGIFAAGD) lines the FAD pocket.

The protein belongs to the class-II pyridine nucleotide-disulfide oxidoreductase family. Homodimer. FAD serves as cofactor.

Serves to protect the cell against DNA damage by alkyl hydroperoxides. It can use either NADH or NADPH as electron donor for direct reduction of redox dyes or of alkyl hydroperoxides when combined with the AhpC protein. The protein is Alkyl hydroperoxide reductase subunit F (ahpF) of Staphylococcus epidermidis (strain ATCC 35984 / DSM 28319 / BCRC 17069 / CCUG 31568 / BM 3577 / RP62A).